The chain runs to 458 residues: MTLAQFGGLFVVYLIGTLFVLTLTYQEFRRVRFNFNVFFSLLYLLTFYFGFPLTCLLVFQFDVEVVPVEFLLYAILSATAFYAIYYVSYKTRLRKRSVQPRKAVFSMNRVETHLTWILLALVAIVTVGIFFLQNGFLLFKLNSYSQIFSSDVSGVALKRFFYFFIPAMLVVYFLKQDLRAWFFFLAATVAFGILTYVIVGGTRANIIIAFSLFLFIGIVRGWISLWMLVAAGVFGIVGMFWLALKRYSLDVSGPEAFYTFLYLTRDTFSPWENLALLLQNYDKIDFQGLAPIVRDFYVFIPSWLWPGRPDTVLNTANYFTWEVLDNHSGLAISPTLIGSLVVMGGALFIPVGAVLVGMIIKWFDWLYEMGKSESNRYKAAILQGFCFGAVFNIIVLAREGVDSFVSRVVFFCLIFGVCLLMAKLLYWLFDTAGLIKARVQRSRTLTPPASSVRADGLL.

A run of 11 helical transmembrane segments spans residues 3-23 (LAQF…VLTL), 37-57 (VFFS…TCLL), 65-85 (VVPV…YAIY), 112-132 (THLT…IFFL), 154-174 (GVAL…VYFL), 180-200 (AWFF…VIVG), 201-221 (GTRA…IVRG), 222-242 (WISL…MFWL), 340-360 (LVVM…GMII), 377-397 (YKAA…IVLA), and 409-429 (VFFC…YWLF).

It belongs to the WzyE family. In terms of assembly, probably part of a complex composed of WzxE, WzyE and WzzE.

It is found in the cell inner membrane. The protein operates within bacterial outer membrane biogenesis; enterobacterial common antigen biosynthesis. Functionally, probably involved in the polymerization of enterobacterial common antigen (ECA) trisaccharide repeat units. This Serratia proteamaculans (strain 568) protein is Probable ECA polymerase.